A 125-amino-acid polypeptide reads, in one-letter code: Glycine cleavage system H protein (125 aa).

The Lipoyl-binding domain occupies 23-105 (VSTVGITEHA…FEGGWLFKVR (83 aa)). Lys64 carries the N6-lipoyllysine modification.

The protein belongs to the GcvH family. In terms of assembly, the glycine cleavage system is composed of four proteins: P, T, L and H. (R)-lipoate serves as cofactor.

Its function is as follows. The glycine cleavage system catalyzes the degradation of glycine. The H protein shuttles the methylamine group of glycine from the P protein to the T protein. The polypeptide is Glycine cleavage system H protein (Streptomyces avermitilis (strain ATCC 31267 / DSM 46492 / JCM 5070 / NBRC 14893 / NCIMB 12804 / NRRL 8165 / MA-4680)).